The primary structure comprises 101 residues: Thiosulfate sulfurtransferase GlpE (101 aa).

Residues 17–101 (EAKSVQIVDI…GFSAWHEANA (85 aa)) enclose the Rhodanese domain. Catalysis depends on cysteine 65, which acts as the Cysteine persulfide intermediate.

Belongs to the GlpE family.

It localises to the cytoplasm. The enzyme catalyses thiosulfate + hydrogen cyanide = thiocyanate + sulfite + 2 H(+). It carries out the reaction thiosulfate + [thioredoxin]-dithiol = [thioredoxin]-disulfide + hydrogen sulfide + sulfite + 2 H(+). In terms of biological role, transferase that catalyzes the transfer of sulfur from thiosulfate to thiophilic acceptors such as cyanide or dithiols. May function in a CysM-independent thiosulfate assimilation pathway by catalyzing the conversion of thiosulfate to sulfite, which can then be used for L-cysteine biosynthesis. This chain is Thiosulfate sulfurtransferase GlpE, found in Shewanella oneidensis (strain ATCC 700550 / JCM 31522 / CIP 106686 / LMG 19005 / NCIMB 14063 / MR-1).